The following is a 143-amino-acid chain: Large ribosomal subunit protein uL13 (143 aa).

It belongs to the universal ribosomal protein uL13 family. Part of the 50S ribosomal subunit.

Functionally, this protein is one of the early assembly proteins of the 50S ribosomal subunit, although it is not seen to bind rRNA by itself. It is important during the early stages of 50S assembly. In Neisseria meningitidis serogroup C (strain 053442), this protein is Large ribosomal subunit protein uL13.